A 392-amino-acid polypeptide reads, in one-letter code: Mitochondrial distribution and morphology protein 10 (392 aa).

Belongs to the MDM10 family. In terms of assembly, component of the ER-mitochondria encounter structure (ERMES) or MDM complex, composed of MMM1, MDM10, MDM12 and MDM34. Associates with the mitochondrial outer membrane sorting assembly machinery SAM(core) complex.

The protein resides in the mitochondrion outer membrane. Component of the ERMES/MDM complex, which serves as a molecular tether to connect the endoplasmic reticulum and mitochondria. Components of this complex are involved in the control of mitochondrial shape and protein biogenesis and may function in phospholipid exchange. MDM10 is involved in the late assembly steps of the general translocase of the mitochondrial outer membrane (TOM complex). Functions in the TOM40-specific route of the assembly of outer membrane beta-barrel proteins, including the association of TOM40 with the receptor TOM22 and small TOM proteins. Can associate with the SAM(core) complex as well as the MDM12-MMM1 complex, both involved in late steps of the major beta-barrel assembly pathway, that is responsible for biogenesis of all outer membrane beta-barrel proteins. May act as a switch that shuttles between both complexes and channels precursor proteins into the TOM40-specific pathway. Plays a role in mitochondrial morphology and in the inheritance of mitochondria. The chain is Mitochondrial distribution and morphology protein 10 from Phaeosphaeria nodorum (strain SN15 / ATCC MYA-4574 / FGSC 10173) (Glume blotch fungus).